Consider the following 337-residue polypeptide: Glyceraldehyde-3-phosphate dehydrogenase 2 (337 aa).

NAD(+) is bound by residues 11-12, D35, R79, and T121; that span reads RI. D-glyceraldehyde 3-phosphate-binding positions include 153–155, T184, R199, 212–213, and R235; these read SCT and TG. Catalysis depends on C154, which acts as the Nucleophile. N317 serves as a coordination point for NAD(+).

This sequence belongs to the glyceraldehyde-3-phosphate dehydrogenase family. As to quaternary structure, homotetramer.

The protein localises to the cytoplasm. The catalysed reaction is D-glyceraldehyde 3-phosphate + phosphate + NADP(+) = (2R)-3-phospho-glyceroyl phosphate + NADPH + H(+). It carries out the reaction D-glyceraldehyde 3-phosphate + phosphate + NAD(+) = (2R)-3-phospho-glyceroyl phosphate + NADH + H(+). It participates in carbohydrate degradation; glycolysis; pyruvate from D-glyceraldehyde 3-phosphate: step 1/5. Its function is as follows. Involved in photosynthetic carbon assimilation. Catalyzes the NAD(P)-dependent oxidative phosphorylation of glyceraldehyde 3-phosphate (G3P) to 1,3-bisphosphoglycerate (BPG). The first reaction step involves the formation of a hemiacetal intermediate between G3P and a cysteine residue, and this hemiacetal intermediate is then oxidized to a thioester, with concomitant reduction of NAD to NADH. The reduced NADH is then exchanged with the second NAD, and the thioester is attacked by a nucleophilic inorganic phosphate to produce BPG. It can use both NADP and NAD. The chain is Glyceraldehyde-3-phosphate dehydrogenase 2 (gap2) from Synechocystis sp. (strain ATCC 27184 / PCC 6803 / Kazusa).